Consider the following 250-residue polypeptide: DSC E3 ubiquitin ligase complex subunit 3 (250 aa).

The interval 105–130 (LASQDQAQSGLNSNSESPDDLQNAQT) is disordered. Residues 107-130 (SQDQAQSGLNSNSESPDDLQNAQT) show a composition bias toward polar residues. The N-linked (GlcNAc...) asparagine glycan is linked to Asn187. The next 2 membrane-spanning stretches (helical) occupy residues 199–219 (TLLAGVLIGFFGGAIACYFLW) and 228–248 (MQLSILVGIICNFAYGLLHSY).

It belongs to the dsc3 family. In terms of assembly, component of the DSC E3 ubiquitin ligase complex composed of dsc1, dsc2, dsc3 and dsc4.

Its subcellular location is the endoplasmic reticulum membrane. It is found in the golgi apparatus membrane. It functions in the pathway protein modification; protein ubiquitination. In terms of biological role, component of the DSC E3 ubiquitin ligase complex which is required for the sre1 transcriptional activator proteolytic cleavage to release the soluble transcription factor from the membrane in low oxygen or sterol conditions. The complex also plays an important role in the multivesicular body (MVB) pathway and functions in a post-endoplasmic reticulum pathway for protein degradation. This Schizosaccharomyces pombe (strain 972 / ATCC 24843) (Fission yeast) protein is DSC E3 ubiquitin ligase complex subunit 3 (dsc3).